A 245-amino-acid chain; its full sequence is tRNA1(Val) (adenine(37)-N6)-methyltransferase (245 aa).

Belongs to the methyltransferase superfamily. tRNA (adenine-N(6)-)-methyltransferase family.

It localises to the cytoplasm. It catalyses the reaction adenosine(37) in tRNA1(Val) + S-adenosyl-L-methionine = N(6)-methyladenosine(37) in tRNA1(Val) + S-adenosyl-L-homocysteine + H(+). Specifically methylates the adenine in position 37 of tRNA(1)(Val) (anticodon cmo5UAC). The polypeptide is tRNA1(Val) (adenine(37)-N6)-methyltransferase (Salmonella paratyphi A (strain ATCC 9150 / SARB42)).